The primary structure comprises 246 residues: UDP-N-acetyl-D-mannosaminuronic acid transferase (246 aa).

This sequence belongs to the glycosyltransferase 26 family.

It catalyses the reaction UDP-N-acetyl-alpha-D-mannosaminouronate + N-acetyl-alpha-D-glucosaminyl-di-trans,octa-cis-undecaprenyl diphosphate = beta-D-ManNAcA-(1-&gt;4)-alpha-D-GlcNAc-di-trans,octa-cis-undecaprenyl diphosphate + UDP + H(+). Its pathway is bacterial outer membrane biogenesis; enterobacterial common antigen biosynthesis. In terms of biological role, catalyzes the synthesis of Und-PP-GlcNAc-ManNAcA (Lipid II), the second lipid-linked intermediate involved in enterobacterial common antigen (ECA) synthesis. The chain is UDP-N-acetyl-D-mannosaminuronic acid transferase from Escherichia coli O6:K15:H31 (strain 536 / UPEC).